The primary structure comprises 192 residues: Adenine phosphoribosyltransferase 2 (192 aa).

Belongs to the purine/pyrimidine phosphoribosyltransferase family. Homodimer.

It localises to the cytoplasm. It carries out the reaction AMP + diphosphate = 5-phospho-alpha-D-ribose 1-diphosphate + adenine. Its pathway is purine metabolism; AMP biosynthesis via salvage pathway; AMP from adenine: step 1/1. Catalyzes a salvage reaction resulting in the formation of AMP, that is energically less costly than de novo synthesis. May contribute to the recycling of adenine into adenylate nucleotides and the inactivation of cytokinins by phosphoribosylation. Possesses low activity toward adenine and cytokinins. The polypeptide is Adenine phosphoribosyltransferase 2 (APT2) (Arabidopsis thaliana (Mouse-ear cress)).